The following is a 212-amino-acid chain: Fibrillarin-like rRNA/tRNA 2'-O-methyltransferase (212 aa).

S-adenosyl-L-methionine is bound by residues 73-74 (TT), 91-92 (EI), 116-117 (DA), and 136-139 (DVAQ).

It belongs to the methyltransferase superfamily. Fibrillarin family. In terms of assembly, interacts with nop5. Component of box C/D small ribonucleoprotein (sRNP) particles that contain rpl7ae, FlpA and nop5, plus a guide RNA.

Functionally, involved in pre-rRNA and tRNA processing. Utilizes the methyl donor S-adenosyl-L-methionine to catalyze the site-specific 2'-hydroxyl methylation of ribose moieties in rRNA and tRNA. Site specificity is provided by a guide RNA that base pairs with the substrate. Methylation occurs at a characteristic distance from the sequence involved in base pairing with the guide RNA. The sequence is that of Fibrillarin-like rRNA/tRNA 2'-O-methyltransferase from Methanothrix thermoacetophila (strain DSM 6194 / JCM 14653 / NBRC 101360 / PT) (Methanosaeta thermophila).